Here is a 326-residue protein sequence, read N- to C-terminus: MSILPVIFLSIFFYSSFVQTFNAPECIDKGQYFASFMELENEPVILPCPQINTLSSGYNILDILWEKRGADNDRIIPIDNGSNMLILNPTQSDSGIYICITTNETYCDMMSLNLTIVSVSESNIDLISYPQIVNERSTGEMVCPNINAFIASNVNADIIWSGHRRLRNKRLKQRTPGIITIEDVRKNDAGYYTCVLEYIYGGKTYNVTRIVKLEVRDKIIPSTMQLPDGIVTSIGSNLTIACRVSLRPPTTDADVFWISNGMYYEEDDGDGNGRISVANKIYMTDKRRVITSRLNINPVKEEDATTFTCMAFTIPSISKTVTVSIT.

Residues 1–18 (MSILPVIFLSIFFYSSFV) form the signal peptide. Ig-like domains follow at residues 24–115 (PECI…LNLT), 122–212 (SNID…RIVK), and 221–322 (PSTM…KTVT). A disulfide bridge connects residues cysteine 48 and cysteine 99. N-linked (GlcNAc...) asparagine; by host glycans are attached at residues asparagine 80, asparagine 103, and asparagine 113. A disulfide bridge links cysteine 143 with cysteine 194. 2 N-linked (GlcNAc...) asparagine; by host glycosylation sites follow: asparagine 206 and asparagine 237. A disulfide bridge connects residues cysteine 242 and cysteine 309.

It belongs to the interleukin-1 receptor family. As to quaternary structure, interacts with mouse Il1b.

Its subcellular location is the secreted. Functionally, may reduce the host inflammatory response by interacting with inteleukin-1 beta (Il1b) and thus decreasing the association between IL1B and its cellular receptor. In Vaccinia virus (strain Western Reserve) (VACV), this protein is Interleukin-1-binding protein (OPG201).